Here is a 183-residue protein sequence, read N- to C-terminus: UPF0302 protein BH1670 (183 aa).

The protein belongs to the UPF0302 family.

This chain is UPF0302 protein BH1670, found in Halalkalibacterium halodurans (strain ATCC BAA-125 / DSM 18197 / FERM 7344 / JCM 9153 / C-125) (Bacillus halodurans).